The primary structure comprises 699 residues: Chitin synthase 7 (699 aa).

The next 6 helical transmembrane spans lie at 19 to 39 (IVGV…AAFL), 58 to 80 (SVVV…VVTL), 98 to 118 (LQWF…LFCI), 445 to 465 (FMQN…LAII), 474 to 494 (LPVG…IYFG), and 507 to 527 (VMFV…IFTA). The segment at 628 to 648 (AAGGSGEASEPGTRWAPDPRE) is disordered.

The protein belongs to the chitin synthase family. Class VI subfamily.

The protein localises to the cell membrane. The enzyme catalyses [(1-&gt;4)-N-acetyl-beta-D-glucosaminyl](n) + UDP-N-acetyl-alpha-D-glucosamine = [(1-&gt;4)-N-acetyl-beta-D-glucosaminyl](n+1) + UDP + H(+). In terms of biological role, polymerizes chitin, a structural polymer of the cell wall and septum, by transferring the sugar moiety of UDP-GlcNAc to the non-reducing end of the growing chitin polymer. Plays a role in cell wall integrity. Required to successfully penetrate the host plants and thus plays a key role in pathogenicity. The chain is Chitin synthase 7 from Verticillium dahliae (strain VdLs.17 / ATCC MYA-4575 / FGSC 10137) (Verticillium wilt).